The sequence spans 376 residues: Protein STRICTOSIDINE SYNTHASE-LIKE 2 (376 aa).

Residues 1 to 23 form the signal peptide; it reads MMKLLLVVATSVALIFSVTDLSG. N-linked (GlcNAc...) asparagine glycans are attached at residues asparagine 79 and asparagine 244.

Belongs to the strictosidine synthase family.

Its subcellular location is the vacuole. This chain is Protein STRICTOSIDINE SYNTHASE-LIKE 2, found in Arabidopsis thaliana (Mouse-ear cress).